Consider the following 381-residue polypeptide: Protein pelota homolog (381 aa).

It belongs to the eukaryotic release factor 1 family. Pelota subfamily. As to quaternary structure, component of the Pelota-HBS1L complex, also named Dom34-Hbs1 complex, composed of pelo-1 and hbs-1. A divalent metal cation is required as a cofactor.

It localises to the cytoplasm. Its subcellular location is the nucleus. In terms of biological role, component of the Pelota-HBS1L complex, a complex that recognizes stalled ribosomes and triggers the No-Go Decay (NGD) pathway. In the Pelota-HBS1L complex, pelo-1 recognizes ribosomes stalled at the 3' end of an mRNA and engages stalled ribosomes by destabilizing mRNA in the mRNA channel. Following ribosome-binding, the Pelota-HBS1L complex promotes the disassembly of stalled ribosomes, followed by degradation of damaged mRNAs as part of the NGD pathway. The chain is Protein pelota homolog from Caenorhabditis elegans.